Here is a 403-residue protein sequence, read N- to C-terminus: ATP phosphoribosyltransferase regulatory subunit (403 aa).

This sequence belongs to the class-II aminoacyl-tRNA synthetase family. HisZ subfamily. Heteromultimer composed of HisG and HisZ subunits.

The protein localises to the cytoplasm. It participates in amino-acid biosynthesis; L-histidine biosynthesis; L-histidine from 5-phospho-alpha-D-ribose 1-diphosphate: step 1/9. Its function is as follows. Required for the first step of histidine biosynthesis. May allow the feedback regulation of ATP phosphoribosyltransferase activity by histidine. The chain is ATP phosphoribosyltransferase regulatory subunit from Crocosphaera subtropica (strain ATCC 51142 / BH68) (Cyanothece sp. (strain ATCC 51142)).